Reading from the N-terminus, the 142-residue chain is AP-2 complex subunit sigma (142 aa).

Belongs to the adaptor complexes small subunit family. Adaptor protein complex 2 (AP-2) is a heterotetramer composed of two large adaptins (alpha-type and beta-type subunits), a medium adaptin (mu-type subunit) and a small adaptin (sigma-type subunit).

The protein localises to the cell membrane. Its subcellular location is the membrane. It localises to the coated pit. In terms of biological role, subunit of the adaptor protein complex 2 (AP-2). Adaptor protein complexes function in protein transport via transport vesicles in different membrane traffic pathways. Adaptor protein complexes are vesicle coat components and appear to be involved in cargo selection and vesicle formation. AP-2 is involved in clathrin-dependent endocytosis in which cargo proteins are incorporated into vesicles surrounded by clathrin (clathrin-coated vesicles, CCVs) which are destined for fusion with the early endosome. The complex binds polyphosphoinositides. This chain is AP-2 complex subunit sigma (AP17), found in Arabidopsis thaliana (Mouse-ear cress).